The primary structure comprises 396 residues: DNA polymerase IV (396 aa).

A UmuC domain is found at 5–192; that stretch reads IFHVDVNSAF…LPVGELFMVG (188 aa). 2 residues coordinate Mg(2+): Asp9 and Asp111. Glu112 is an active-site residue.

Belongs to the DNA polymerase type-Y family. In terms of assembly, monomer. Mg(2+) serves as cofactor.

The protein localises to the cytoplasm. The enzyme catalyses DNA(n) + a 2'-deoxyribonucleoside 5'-triphosphate = DNA(n+1) + diphosphate. In terms of biological role, poorly processive, error-prone DNA polymerase involved in untargeted mutagenesis. Copies undamaged DNA at stalled replication forks, which arise in vivo from mismatched or misaligned primer ends. These misaligned primers can be extended by PolIV. Exhibits no 3'-5' exonuclease (proofreading) activity. May be involved in translesional synthesis, in conjunction with the beta clamp from PolIII. This Clostridium acetobutylicum (strain ATCC 824 / DSM 792 / JCM 1419 / IAM 19013 / LMG 5710 / NBRC 13948 / NRRL B-527 / VKM B-1787 / 2291 / W) protein is DNA polymerase IV.